Consider the following 103-residue polypeptide: Large ribosomal subunit protein bL21 (103 aa).

The protein belongs to the bacterial ribosomal protein bL21 family. As to quaternary structure, part of the 50S ribosomal subunit. Contacts protein L20.

Its function is as follows. This protein binds to 23S rRNA in the presence of protein L20. This is Large ribosomal subunit protein bL21 from Shewanella piezotolerans (strain WP3 / JCM 13877).